A 465-amino-acid polypeptide reads, in one-letter code: Cysteine--tRNA ligase (465 aa).

Position 27 (cysteine 27) interacts with Zn(2+). The 'HIGH' region motif lies at 29-39 (PTVYDFIHIGN). Zn(2+)-binding residues include cysteine 207, histidine 232, and glutamate 236. Residues 264–268 (KMSKS) carry the 'KMSKS' region motif. Lysine 267 lines the ATP pocket.

Belongs to the class-I aminoacyl-tRNA synthetase family. Monomer. Requires Zn(2+) as cofactor.

The protein resides in the cytoplasm. It carries out the reaction tRNA(Cys) + L-cysteine + ATP = L-cysteinyl-tRNA(Cys) + AMP + diphosphate. The protein is Cysteine--tRNA ligase of Caldicellulosiruptor saccharolyticus (strain ATCC 43494 / DSM 8903 / Tp8T 6331).